A 543-amino-acid chain; its full sequence is Chaperonin GroEL (543 aa).

ATP-binding positions include 29–32 (TLGP), K50, 86–90 (DGTTT), G415, and D495.

The protein belongs to the chaperonin (HSP60) family. As to quaternary structure, forms a cylinder of 14 subunits composed of two heptameric rings stacked back-to-back. Interacts with the co-chaperonin GroES.

It localises to the cytoplasm. The enzyme catalyses ATP + H2O + a folded polypeptide = ADP + phosphate + an unfolded polypeptide.. Together with its co-chaperonin GroES, plays an essential role in assisting protein folding. The GroEL-GroES system forms a nano-cage that allows encapsulation of the non-native substrate proteins and provides a physical environment optimized to promote and accelerate protein folding. In Karelsulcia muelleri (strain GWSS) (Sulcia muelleri), this protein is Chaperonin GroEL.